The chain runs to 142 residues: ATP synthase subunit b' (142 aa).

A helical membrane pass occupies residues 7 to 27 (TLPLMMFQFFLLVAVLNAVFF).

This sequence belongs to the ATPase B chain family. F-type ATPases have 2 components, F(1) - the catalytic core - and F(0) - the membrane proton channel. F(1) has five subunits: alpha(3), beta(3), gamma(1), delta(1), epsilon(1). F(0) has four main subunits: a(1), b(1), b'(1) and c(10-14). The alpha and beta chains form an alternating ring which encloses part of the gamma chain. F(1) is attached to F(0) by a central stalk formed by the gamma and epsilon chains, while a peripheral stalk is formed by the delta, b and b' chains.

The protein localises to the cellular thylakoid membrane. F(1)F(0) ATP synthase produces ATP from ADP in the presence of a proton or sodium gradient. F-type ATPases consist of two structural domains, F(1) containing the extramembraneous catalytic core and F(0) containing the membrane proton channel, linked together by a central stalk and a peripheral stalk. During catalysis, ATP synthesis in the catalytic domain of F(1) is coupled via a rotary mechanism of the central stalk subunits to proton translocation. Functionally, component of the F(0) channel, it forms part of the peripheral stalk, linking F(1) to F(0). The b'-subunit is a diverged and duplicated form of b found in plants and photosynthetic bacteria. This chain is ATP synthase subunit b', found in Acaryochloris marina (strain MBIC 11017).